The chain runs to 299 residues: ATP phosphoribosyltransferase (299 aa).

Belongs to the ATP phosphoribosyltransferase family. Long subfamily. As to quaternary structure, equilibrium between an active dimeric form, an inactive hexameric form and higher aggregates. Interconversion between the various forms is largely reversible and is influenced by the natural substrates and inhibitors of the enzyme. It depends on Mg(2+) as a cofactor.

The protein resides in the cytoplasm. The catalysed reaction is 1-(5-phospho-beta-D-ribosyl)-ATP + diphosphate = 5-phospho-alpha-D-ribose 1-diphosphate + ATP. It functions in the pathway amino-acid biosynthesis; L-histidine biosynthesis; L-histidine from 5-phospho-alpha-D-ribose 1-diphosphate: step 1/9. Feedback inhibited by histidine. Functionally, catalyzes the condensation of ATP and 5-phosphoribose 1-diphosphate to form N'-(5'-phosphoribosyl)-ATP (PR-ATP). Has a crucial role in the pathway because the rate of histidine biosynthesis seems to be controlled primarily by regulation of HisG enzymatic activity. The polypeptide is ATP phosphoribosyltransferase (Erwinia tasmaniensis (strain DSM 17950 / CFBP 7177 / CIP 109463 / NCPPB 4357 / Et1/99)).